A 142-amino-acid chain; its full sequence is Dynein light chain Tctex-type protein 2B (142 aa).

It belongs to the dynein light chain Tctex-type family. Light chain of the cytoplasmic dynein complex 2, a multisubunit complex composed at least of eleven different proteins. The cytoplasmic dynein 2 complex consists of two catalytic heavy chains (HCs) and a number of non-catalytic subunits presented by intermediate chains (ICs), light intermediate chains (LICs) and light chains (LCs). Among them, a heavy chain (DYNC2H1), two intermediate chains (DYNC2I2 and DYNC2I1), a light intermediate chain (DYNC2LI1), and a light chain (DYNLT2B) are unique to the dynein-2 complex, but a subset of the light chains are also shared by dynein-1 and dynein-2 complexes. Interacts with DYNC2I1. The dimer DYNLT2B-DYNLT1/DYNLT3 interacts with DYNC2I1; this interaction is crucial for retrograde trafficking of ciliary proteins.

It localises to the dynein axonemal particle. Its function is as follows. Acts as one of several non-catalytic accessory components of the cytoplasmic dynein 2 complex (dynein-2 complex), a motor protein complex that drives the movement of cargos along microtubules within cilia and flagella in concert with the intraflagellar transport (IFT) system. Required for proper retrograde ciliary transport. This chain is Dynein light chain Tctex-type protein 2B, found in Homo sapiens (Human).